The primary structure comprises 188 residues: Probable nicotinate-nucleotide adenylyltransferase (188 aa).

It belongs to the NadD family.

The catalysed reaction is nicotinate beta-D-ribonucleotide + ATP + H(+) = deamido-NAD(+) + diphosphate. Its pathway is cofactor biosynthesis; NAD(+) biosynthesis; deamido-NAD(+) from nicotinate D-ribonucleotide: step 1/1. Catalyzes the reversible adenylation of nicotinate mononucleotide (NaMN) to nicotinic acid adenine dinucleotide (NaAD). In Acholeplasma laidlawii (strain PG-8A), this protein is Probable nicotinate-nucleotide adenylyltransferase.